Here is a 165-residue protein sequence, read N- to C-terminus: GPI-anchored protein LORELEI (165 aa).

Residues 1 to 20 form the signal peptide; it reads MELILLFFFLMALLVSLSSS. The segment at 82-93 is required for its function in pollen tube reception; sequence PYVSQINDMNSD. N137 carries N-linked (GlcNAc...) asparagine glycosylation. A lipid anchor (GPI-anchor amidated serine) is attached at S139. Residues 140–165 constitute a propeptide, removed in mature form; it reads TADSTPRFISLLISAATAVFALLVLT.

Interacts with FER. In terms of tissue distribution, expressed in leaves, buds, flowers and stems. Highest expression in the synergid cells of the female gametophyte.

The protein localises to the cell membrane. Its function is as follows. Female gametophyte-specific component of the signaling pathway required for fertilization. Required for reception of the pollen tube by the female gametophyte. Acts specifically at the synergid cell surface for pollen tube reception. Plays a role in double fertilization and early seed development. Component of the FER-regulated Rho GTPase signaling complex. Acts as a chaperone and coreceptor for FER. Required for localization of FER to the plasma membrane. This is GPI-anchored protein LORELEI (LRE) from Arabidopsis thaliana (Mouse-ear cress).